The sequence spans 221 residues: Endonuclease V (221 aa).

Mg(2+)-binding residues include aspartate 43 and aspartate 111.

The protein belongs to the endonuclease V family. Mg(2+) serves as cofactor.

Its subcellular location is the cytoplasm. It catalyses the reaction Endonucleolytic cleavage at apurinic or apyrimidinic sites to products with a 5'-phosphate.. DNA repair enzyme involved in the repair of deaminated bases. Selectively cleaves double-stranded DNA at the second phosphodiester bond 3' to a deoxyinosine leaving behind the intact lesion on the nicked DNA. This chain is Endonuclease V, found in Azotobacter vinelandii (strain DJ / ATCC BAA-1303).